Here is a 397-residue protein sequence, read N- to C-terminus: Acetate kinase (397 aa).

Mg(2+) is bound at residue asparagine 8. Lysine 15 provides a ligand contact to ATP. Position 89 (arginine 89) interacts with substrate. Aspartate 146 functions as the Proton donor/acceptor in the catalytic mechanism. ATP is bound by residues 206 to 210, 283 to 285, and 331 to 335; these read HVGNG, DMR, and GMGEN. Glutamate 383 is a binding site for Mg(2+).

The protein belongs to the acetokinase family. Homodimer. Mg(2+) serves as cofactor. Requires Mn(2+) as cofactor.

Its subcellular location is the cytoplasm. It carries out the reaction acetate + ATP = acetyl phosphate + ADP. Its pathway is metabolic intermediate biosynthesis; acetyl-CoA biosynthesis; acetyl-CoA from acetate: step 1/2. Functionally, catalyzes the formation of acetyl phosphate from acetate and ATP. Can also catalyze the reverse reaction. The polypeptide is Acetate kinase (Streptococcus agalactiae serotype Ia (strain ATCC 27591 / A909 / CDC SS700)).